A 155-amino-acid chain; its full sequence is Small ribosomal subunit protein uS7 (155 aa).

It belongs to the universal ribosomal protein uS7 family. Part of the 30S ribosomal subunit. Contacts proteins S9 and S11.

Functionally, one of the primary rRNA binding proteins, it binds directly to 16S rRNA where it nucleates assembly of the head domain of the 30S subunit. Is located at the subunit interface close to the decoding center, probably blocks exit of the E-site tRNA. This Corynebacterium aurimucosum (strain ATCC 700975 / DSM 44827 / CIP 107346 / CN-1) (Corynebacterium nigricans) protein is Small ribosomal subunit protein uS7.